Here is a 196-residue protein sequence, read N- to C-terminus: Mitochondrial inner membrane protein SHH3 (196 aa).

The N-terminal 53 residues, 1–53, are a transit peptide targeting the mitochondrion; that stretch reads MKATIQRVTSVFGVPRASVFVPRISTPFILHNYISNGRMDLFSKEFHNGRVSK. Over 54–97 the chain is Mitochondrial matrix; it reads SDLWSSNKEEELLVSQRKKRPISPHLTVYEPEMSWYLSSLHRIS. A ubiquinone contacts are provided by Ser-91 and Arg-95. A helical transmembrane segment spans residues 98-118; that stretch reads GVLLALGFYAFTITLGVTTIM. The Mitochondrial intermembrane portion of the chain corresponds to 119–137; the sequence is GMDTTFQDLNKWYHEKMPK. Residues 138–160 form a helical membrane-spanning segment; that stretch reads WSQWVAKGSAAYLFAFHFGNGIR. A heme-binding site is contributed by His-154. The Mitochondrial matrix segment spans residues 161–174; sequence HLIWDMGYELTNRG. A helical transmembrane segment spans residues 175–195; it reads VIKTGSIVLAGTLVLGTYLLA. A topological domain (mitochondrial intermembrane) is located at residue Gln-196.

The protein belongs to the cytochrome b560 family.

The protein resides in the mitochondrion inner membrane. Its function is as follows. Homolog of SDH3, but seems not to be a stoichiometric subunit of either the succinate dehydrogenase (SDH) complex or the mitochondrial inner membrane translocase TIM22 complex. The chain is Mitochondrial inner membrane protein SHH3 from Saccharomyces cerevisiae (strain ATCC 204508 / S288c) (Baker's yeast).